Here is a 202-residue protein sequence, read N- to C-terminus: MALVIGLTGGIASGKTTVANLFQQHFAIDIVDADIVARQVVAPGSAGLAAIVDHFGADILTREGELDRGQLRQRIFAHAEEKQWLNALLHPMIRRKMIEDLAQVSSPYALLVVPLLVENQLQTLCDRVLVVDVEEKTQLQRTMDRDGVDEQQVRAILKAQASRHERLALADDVIKNESKDQDLLQQITDLHQKYLAMSKQNR.

Residues 4-201 (VIGLTGGIAS…QKYLAMSKQN (198 aa)) form the DPCK domain. 12-17 (ASGKTT) contacts ATP.

This sequence belongs to the CoaE family.

The protein localises to the cytoplasm. The enzyme catalyses 3'-dephospho-CoA + ATP = ADP + CoA + H(+). The protein operates within cofactor biosynthesis; coenzyme A biosynthesis; CoA from (R)-pantothenate: step 5/5. Functionally, catalyzes the phosphorylation of the 3'-hydroxyl group of dephosphocoenzyme A to form coenzyme A. The chain is Dephospho-CoA kinase from Vibrio vulnificus (strain YJ016).